Here is a 210-residue protein sequence, read N- to C-terminus: Somatotropin-1 (210 aa).

Residues 1 to 22 form the signal peptide; it reads MARALVLLSVVLVSLLVNQGRA. H38 contributes to the Zn(2+) binding site. The cysteines at positions 71 and 183 are disulfide-linked. Zn(2+) is bound at residue E192. C200 and C208 are oxidised to a cystine.

Belongs to the somatotropin/prolactin family.

It is found in the secreted. Growth hormone plays an important role in growth control and is involved in the regulation of several anabolic processes. Implicated as an osmoregulatory substance important for seawater adaptation. This Carassius auratus (Goldfish) protein is Somatotropin-1 (gh1).